A 502-amino-acid polypeptide reads, in one-letter code: Glycerol kinase (502 aa).

Threonine 14 is an ADP binding site. Residues threonine 14, threonine 15, and serine 16 each contribute to the ATP site. Position 14 (threonine 14) interacts with sn-glycerol 3-phosphate. Arginine 18 provides a ligand contact to ADP. Sn-glycerol 3-phosphate is bound by residues arginine 84, glutamate 85, tyrosine 136, and aspartate 246. Residues arginine 84, glutamate 85, tyrosine 136, aspartate 246, and glutamine 247 each contribute to the glycerol site. ADP contacts are provided by threonine 268 and glycine 311. Residues threonine 268, glycine 311, glutamine 315, and glycine 412 each contribute to the ATP site. ADP-binding residues include glycine 412 and asparagine 416.

It belongs to the FGGY kinase family. As to quaternary structure, homotetramer and homodimer (in equilibrium). Heterodimer with EIIA-Glc. Binds 1 zinc ion per glycerol kinase EIIA-Glc dimer. The zinc ion is important for dimerization.

It catalyses the reaction glycerol + ATP = sn-glycerol 3-phosphate + ADP + H(+). It participates in polyol metabolism; glycerol degradation via glycerol kinase pathway; sn-glycerol 3-phosphate from glycerol: step 1/1. Activity of this regulatory enzyme is affected by several metabolites. Allosterically and non-competitively inhibited by fructose 1,6-bisphosphate (FBP) and unphosphorylated phosphocarrier protein EIIA-Glc (III-Glc), an integral component of the bacterial phosphotransferase (PTS) system. Its function is as follows. Key enzyme in the regulation of glycerol uptake and metabolism. Catalyzes the phosphorylation of glycerol to yield sn-glycerol 3-phosphate. The polypeptide is Glycerol kinase (Salmonella heidelberg (strain SL476)).